A 275-amino-acid chain; its full sequence is Large ribosomal subunit protein uL2 (275 aa).

The segment at 221-275 is disordered; that stretch reads VRGVAMNPVDHPMGGGEGKSSGGRHPCSPWGQQSKGVRTRNNKRTDQFIVKRRSK.

Belongs to the universal ribosomal protein uL2 family. As to quaternary structure, part of the 50S ribosomal subunit. Forms a bridge to the 30S subunit in the 70S ribosome.

Functionally, one of the primary rRNA binding proteins. Required for association of the 30S and 50S subunits to form the 70S ribosome, for tRNA binding and peptide bond formation. It has been suggested to have peptidyltransferase activity; this is somewhat controversial. Makes several contacts with the 16S rRNA in the 70S ribosome. This is Large ribosomal subunit protein uL2 from Desulfosudis oleivorans (strain DSM 6200 / JCM 39069 / Hxd3) (Desulfococcus oleovorans).